The following is a 791-amino-acid chain: Nuclear cap-binding protein subunit 1-A (791 aa).

Residues 1–24 (MSRRRHSDENDGGQAHKRRKTSEP) form a disordered region. The MIF4G domain occupies 28–240 (EDRLESLICR…CLWAQIQKLK (213 aa)). Positions 641 to 714 (LHSTIRKMNK…SEQKNLFLVI (74 aa)) form a coiled coil. A disordered region spans residues 664–687 (QRLAKQHKHRDSDDNDEDSGRKDG).

It belongs to the NCBP1 family. Component of the nuclear cap-binding complex (CBC), a heterodimer composed of ncbp1/cbp80 and ncbp2/cbp20 that interacts with m7GpppG-capped RNA. Component of an alternative nuclear cap-binding complex (CBC) composed of ncbp1/cbp80 and ncbp3.

It localises to the nucleus. Its subcellular location is the cytoplasm. Functionally, component of the cap-binding complex (CBC), which binds cotranscriptionally to the 5'-cap of pre-mRNAs and is involved in various processes such as pre-mRNA splicing, translation regulation, nonsense-mediated mRNA decay, RNA-mediated gene silencing (RNAi) by microRNAs (miRNAs) and mRNA export. The CBC complex is involved in mRNA export from the nucleus, leading to the recruitment of the mRNA export machinery to the 5'-end of mRNA and to mRNA export in a 5' to 3' direction through the nuclear pore. The CBC complex is also involved in mediating U snRNA and intronless mRNAs export from the nucleus. The CBC complex is essential for a pioneer round of mRNA translation, before steady state translation when the CBC complex is replaced by cytoplasmic cap-binding protein eIF4E. The pioneer round of mRNA translation mediated by the CBC complex plays a central role in nonsense-mediated mRNA decay (NMD), NMD only taking place in mRNAs bound to the CBC complex, but not on eIF4E-bound mRNAs. The CBC complex enhances NMD in mRNAs containing at least one exon-junction complex (EJC), promoting the interaction between UPF1 and UPF2. The CBC complex is also involved in 'failsafe' NMD, which is independent of the EJC complex, while it does not participate in Staufen-mediated mRNA decay (SMD). During cell proliferation, the CBC complex is also involved in microRNAs (miRNAs) biogenesis via its interaction with SRRT/ARS2 and is required for miRNA-mediated RNA interference. The CBC complex also acts as a negative regulator of parn, thereby acting as an inhibitor of mRNA deadenylation. In the CBC complex, NCBP1/CBP80 does not bind directly capped RNAs (m7GpppG-capped RNA) but is required to stabilize the movement of the N-terminal loop of NCBP2/CBP20 and lock the CBC into a high affinity cap-binding state with the cap structure. Associates with NCBP3 to form an alternative cap-binding complex (CBC) which plays a key role in mRNA export. The conventional CBC with NCBP2 binds both small nuclear RNA (snRNA) and messenger (mRNA) and is involved in their export from the nucleus whereas the alternative CBC with NCBP3 does not bind snRNA and associates only with mRNA thereby playing a role only in mRNA export. The chain is Nuclear cap-binding protein subunit 1-A (ncbp1-a) from Xenopus laevis (African clawed frog).